Consider the following 867-residue polypeptide: Bifunctional diterpene synthase, chloroplastic (867 aa).

The transit peptide at 1-55 directs the protein to the chloroplast; the sequence is MAKVLFSSFQQTGISGSLKSGQLSGVFINGTNLKSNAHAKRFRKNSTSSITIRCC. Lys-255 is a binding site for substrate. Asp-389 and Asp-391 together coordinate Mg(2+). Positions 389 to 392 match the DXDD motif motif; that stretch reads DIDD. Lys-474 contacts substrate. Mg(2+) is bound by residues Asp-611, Asp-615, Asn-758, Thr-762, and Glu-766. A DDXXD motif motif is present at residues 611 to 615; the sequence is DDLMD.

This sequence belongs to the terpene synthase family. It depends on Mg(2+) as a cofactor.

The protein localises to the plastid. It is found in the chloroplast. It catalyses the reaction (+)-copalyl diphosphate = miltiradiene + diphosphate. The enzyme catalyses (2E,6E,10E)-geranylgeranyl diphosphate = (+)-copalyl diphosphate. It participates in secondary metabolite biosynthesis; terpenoid biosynthesis. Its function is as follows. Bifunctional diterpene cyclase that catalyzes the successive two-step type-B (protonation-initiated cyclization) and type-A (ionization-initiated cyclization) reactions of geranylgeranyl diphosphate (GGDP) producing successively (+)-copalyl diphosphate and miltiradiene. This is Bifunctional diterpene synthase, chloroplastic (MDS) from Selaginella moellendorffii (Spikemoss).